The primary structure comprises 259 residues: Chloroplastic group IIB intron splicing facilitator CRS2, chloroplastic (259 aa).

The disordered stretch occupies residues 1-21 (MSLAVATPASARLSPLTTSSP). Residues 1 to 49 (MSLAVATPASARLSPLTTSSPEPCRRRRLLLSAAAPLRRTRLRRRIAVV) constitute a chloroplast transit peptide. Y77 is a binding site for tRNA. The active-site Proton acceptor is H82. Residues Y127, N129, and N175 each contribute to the tRNA site.

This sequence belongs to the PTH family. CRS2 subfamily. In terms of assembly, part of large ribonucleo-protein complexes that include group IIB introns and either CAF1 or CAF2.

The protein localises to the plastid. The protein resides in the chloroplast stroma. In terms of biological role, required for the splicing of group IIB introns in chloroplasts. The polypeptide is Chloroplastic group IIB intron splicing facilitator CRS2, chloroplastic (Oryza sativa subsp. japonica (Rice)).